We begin with the raw amino-acid sequence, 464 residues long: Asparagine--tRNA ligase (464 aa).

The protein belongs to the class-II aminoacyl-tRNA synthetase family. Homodimer.

The protein resides in the cytoplasm. It carries out the reaction tRNA(Asn) + L-asparagine + ATP = L-asparaginyl-tRNA(Asn) + AMP + diphosphate + H(+). The chain is Asparagine--tRNA ligase from Xanthomonas axonopodis pv. citri (strain 306).